We begin with the raw amino-acid sequence, 122 residues long: Iron-sulfur cluster assembly protein SufA (122 aa).

Cysteine 50, cysteine 114, and cysteine 116 together coordinate [2Fe-2S] cluster. Residues cysteine 50, cysteine 114, and cysteine 116 each coordinate [4Fe-4S] cluster.

Belongs to the HesB/IscA family. As to quaternary structure, homodimer. Interacts with SufB and SufC.

In terms of biological role, member of gene cluster sufABCDSE that mediates iron-sulfur cluster assembly under oxidative stress and iron limitation conditions. Binds [2Fe-2S] and [4Fe-4S] clusters by mobilizing sulfur atoms provided by the SufS-SufE cysteine desulfurase system and then transfers the assembled Fe-S clusters to target proteins including ferredoxin and aconitase. Seems to act as a Fe-S cluster carrier rather than a scaffold, this role being performed by SufB and SufC. The polypeptide is Iron-sulfur cluster assembly protein SufA (sufA) (Escherichia coli (strain K12)).